The primary structure comprises 256 residues: Putative ankyrin repeat protein FPV231 (256 aa).

ANK repeat units follow at residues 1 to 20 (MFGNTTISKMLLDYGARIDS), 24 to 53 (EECLPLNHAIATNNKELTSLFLARGADTNI), 57 to 86 (YNRSVLHKAIGNNNITSVKLLLNHGIDYNL), 90 to 119 (HGYTALHYAITLQNREITDMLLSSGADPNI), and 123 to 151 (EKHTPLYHALLYRSSNVESLILHGADINI).

This is Putative ankyrin repeat protein FPV231 from Vertebrata (FPV).